Here is a 377-residue protein sequence, read N- to C-terminus: Ferric enterobactin transport protein FepE (377 aa).

Topologically, residues 1–41 (MSSLNIKQGSDAHFPDYPLASPSNNEIDLLNLISVLWRAKK) are cytoplasmic. Residues 42-62 (TVMAVVFAFACAGLLISFILP) traverse the membrane as a helical segment. Over 63–338 (QKWTSAAVVT…LPVKKDGPGK (276 aa)) the chain is Periplasmic. The chain crosses the membrane as a helical span at residues 339-359 (AIIVILSALIGGMVACGGVLL). The Cytoplasmic portion of the chain corresponds to 360–377 (RYAMASRKQDAMMADHLV).

Belongs to the WzzB/Cld/Rol family.

The protein resides in the cell inner membrane. Functionally, part of the ferric enterobactin transport system. The sequence is that of Ferric enterobactin transport protein FepE (fepE) from Escherichia coli (strain K12).